The following is a 442-amino-acid chain: D-serine dehydratase (442 aa).

Lys-118 bears the N6-(pyridoxal phosphate)lysine mark.

This sequence belongs to the serine/threonine dehydratase family. DsdA subfamily. As to quaternary structure, monomer. Pyridoxal 5'-phosphate serves as cofactor.

It catalyses the reaction D-serine = pyruvate + NH4(+). This is D-serine dehydratase from Escherichia fergusonii (strain ATCC 35469 / DSM 13698 / CCUG 18766 / IAM 14443 / JCM 21226 / LMG 7866 / NBRC 102419 / NCTC 12128 / CDC 0568-73).